A 632-amino-acid polypeptide reads, in one-letter code: DNA polymerase eta (632 aa).

Residues 26-309 form the UmuC domain; it reads IAHIDMNAFF…FEITSFWTLG (284 aa). The Mg(2+) site is built by Asp-30 and Asp-155. A UBZ3-type zinc finger spans residues 545–580; the sequence is EKTPKLECCKYQVTFTDQKALQEHADYHLALKLSEG. 4 residues coordinate Zn(2+): Cys-552, Cys-553, His-568, and His-572. Positions 598–632 are disordered; it reads LLFSRKRPNSQHTATPQKKQVTSSKNILSFFTRKK. Polar residues predominate over residues 607 to 626; sequence SQHTATPQKKQVTSSKNILS. The interval 625 to 632 is POL30-binding; the sequence is LSFFTRKK.

This sequence belongs to the DNA polymerase type-Y family. In terms of assembly, interacts with POL30. This interaction is essential for the polymerase eta function.

The protein resides in the nucleus. It catalyses the reaction DNA(n) + a 2'-deoxyribonucleoside 5'-triphosphate = DNA(n+1) + diphosphate. Its function is as follows. DNA polymerase specifically involved in DNA repair. Plays an important role in translesion synthesis, where the normal high fidelity DNA polymerases cannot proceed and DNA synthesis stalls. Plays an important role in the repair of UV-induced pyrimidine dimers. Depending on the context, it inserts the correct base, but causes frequent base transitions and transversions. Efficiently incorporates nucleotides opposite to other UV or oxidative DNA damages like O(6)-methylguanine, 7,8-dihydro-8-oxoguanine, 2,6-diamino-4-hydroxy-5-formamidopyrimidine of 2'-deoxyguanosine (FaPydG), or p-benzoquinone DNA adducts. In Saccharomyces cerevisiae (strain ATCC 204508 / S288c) (Baker's yeast), this protein is DNA polymerase eta (RAD30).